A 278-amino-acid chain; its full sequence is MTLSSALIKIFITFLFLQNHVNSQYSSPSKPQPSLGSTISFSITKFDDESPNIFVKGDTSISNGVLSLTKTDKYSGKPLQKSVGHATHLTPIHIWDETSGELADFSTSFSFIVNTNGSSLHGDGFTFFLGPLHFDLPKNSSGGYLGLFNPETALIASQNPIVAIEFDSFTNGWDPASPSQYTHIGIDVGSIDSVSTADWPLNVLPRNALGEARINYNSESKRLSAFVDYPGLGESTGVSFVVDLRSVLPEWVRVGFSAATGELVETHDIINWSFEAAL.

A signal peptide spans 1 to 23 (MTLSSALIKIFITFLFLQNHVNS). 3 N-linked (GlcNAc...) asparagine glycosylation sites follow: N116, N139, and N271.

It belongs to the leguminous lectin family.

In terms of biological role, may be involved in arbuscular mycorrhizal (AM) symbiosis with AM fungi. This Medicago truncatula (Barrel medic) protein is Lectin 6.